A 1162-amino-acid chain; its full sequence is Carbamoyl phosphate synthase large chain (1162 aa).

The carboxyphosphate synthetic domain stretch occupies residues Met1 to Glu456. Residues Arg129, Arg222, Gly228, Gly229, Glu261, Val263, Glu268, Gly294, Val295, His296, Gln338, and Glu352 each contribute to the ATP site. In terms of domain architecture, ATP-grasp 1 spans Glu186 to Val381. Mg(2+) is bound by residues Gln338, Glu352, and Asn354. Residues Gln338, Glu352, and Asn354 each coordinate Mn(2+). An oligomerization domain region spans residues Thr457–Ala613. Residues Glu614–Gly1025 are carbamoyl phosphate synthetic domain. The ATP-grasp 2 domain occupies Gln742–Ala954. The ATP site is built by Arg778, Thr838, Leu840, Glu845, Gly870, Ile871, His872, Ser873, Gln913, and Glu925. Gln913, Glu925, and Asn927 together coordinate Mg(2+). Mn(2+) is bound by residues Gln913, Glu925, and Asn927. Positions Val1026–Ser1162 constitute an MGS-like domain. Positions Val1026–Ser1162 are allosteric domain.

Belongs to the CarB family. Composed of two chains; the small (or glutamine) chain promotes the hydrolysis of glutamine to ammonia, which is used by the large (or ammonia) chain to synthesize carbamoyl phosphate. Tetramer of heterodimers (alpha,beta)4. The cofactor is Mg(2+). Requires Mn(2+) as cofactor.

The enzyme catalyses hydrogencarbonate + L-glutamine + 2 ATP + H2O = carbamoyl phosphate + L-glutamate + 2 ADP + phosphate + 2 H(+). It catalyses the reaction hydrogencarbonate + NH4(+) + 2 ATP = carbamoyl phosphate + 2 ADP + phosphate + 2 H(+). It participates in amino-acid biosynthesis; L-arginine biosynthesis; carbamoyl phosphate from bicarbonate: step 1/1. It functions in the pathway pyrimidine metabolism; UMP biosynthesis via de novo pathway; (S)-dihydroorotate from bicarbonate: step 1/3. Functionally, large subunit of the glutamine-dependent carbamoyl phosphate synthetase (CPSase). CPSase catalyzes the formation of carbamoyl phosphate from the ammonia moiety of glutamine, carbonate, and phosphate donated by ATP, constituting the first step of 2 biosynthetic pathways, one leading to arginine and/or urea and the other to pyrimidine nucleotides. The large subunit (synthetase) binds the substrates ammonia (free or transferred from glutamine from the small subunit), hydrogencarbonate and ATP and carries out an ATP-coupled ligase reaction, activating hydrogencarbonate by forming carboxy phosphate which reacts with ammonia to form carbamoyl phosphate. The protein is Carbamoyl phosphate synthase large chain of Brucella melitensis biotype 1 (strain ATCC 23456 / CCUG 17765 / NCTC 10094 / 16M).